The primary structure comprises 105 residues: Thioredoxin (105 aa).

A Thioredoxin domain is found at 2-105; it reads VKLIESKEAF…KLEASITEYA (104 aa). N6-acetyllysine is present on Lys3. N6-succinyllysine is present on Lys8. Residues Cys32 and Cys35 each act as nucleophile in the active site. A disulfide bond links Cys32 and Cys35. Lys39 carries the post-translational modification N6-acetyllysine. An S-nitrosocysteine mark is found at Cys62 and Cys69. Cys73 carries the post-translational modification S-nitrosocysteine; alternate. Position 94 is an N6-acetyllysine; alternate (Lys94). Lys94 is modified (N6-succinyllysine; alternate).

It belongs to the thioredoxin family. Homodimer; disulfide-linked. Interacts with TXNIP through the redox-active site. Interacts with MAP3K5 and CASP3. Interacts with APEX1; the interaction stimulates the FOS/JUN AP-1 DNA-binding activity in a redox-dependent manner. Post-translationally, in the fully reduced protein, both Cys-69 and Cys-73 are nitrosylated in response to nitric oxide (NO). When two disulfide bonds are present in the protein, only Cys-73 is nitrosylated. Cys-73 can serve as donor for nitrosylation of target proteins.

It localises to the nucleus. The protein resides in the cytoplasm. Its subcellular location is the secreted. Participates in various redox reactions through the reversible oxidation of its active center dithiol to a disulfide and catalyzes dithiol-disulfide exchange reactions. Plays a role in the reversible S-nitrosylation of cysteine residues in target proteins, and thereby contributes to the response to intracellular nitric oxide. Nitrosylates the active site Cys of CASP3 in response to nitric oxide (NO), and thereby inhibits caspase-3 activity. Induces the FOS/JUN AP-1 DNA binding activity in ionizing radiation (IR) cells through its oxidation/reduction status and stimulates AP-1 transcriptional activity. In terms of biological role, ADF augments the expression of the interleukin-2 receptor TAC (IL2R/P55). This chain is Thioredoxin (Txn), found in Mus musculus (Mouse).